The chain runs to 179 residues: ATP synthase subunit delta (179 aa).

The protein belongs to the ATPase delta chain family. In terms of assembly, F-type ATPases have 2 components, F(1) - the catalytic core - and F(0) - the membrane proton channel. F(1) has five subunits: alpha(3), beta(3), gamma(1), delta(1), epsilon(1). F(0) has three main subunits: a(1), b(2) and c(10-14). The alpha and beta chains form an alternating ring which encloses part of the gamma chain. F(1) is attached to F(0) by a central stalk formed by the gamma and epsilon chains, while a peripheral stalk is formed by the delta and b chains.

It is found in the cell inner membrane. F(1)F(0) ATP synthase produces ATP from ADP in the presence of a proton or sodium gradient. F-type ATPases consist of two structural domains, F(1) containing the extramembraneous catalytic core and F(0) containing the membrane proton channel, linked together by a central stalk and a peripheral stalk. During catalysis, ATP synthesis in the catalytic domain of F(1) is coupled via a rotary mechanism of the central stalk subunits to proton translocation. Functionally, this protein is part of the stalk that links CF(0) to CF(1). It either transmits conformational changes from CF(0) to CF(1) or is implicated in proton conduction. In Burkholderia pseudomallei (strain 1710b), this protein is ATP synthase subunit delta.